A 322-amino-acid polypeptide reads, in one-letter code: Porphobilinogen deaminase (322 aa).

Cys-254 carries the S-(dipyrrolylmethanemethyl)cysteine modification.

The protein belongs to the HMBS family. As to quaternary structure, monomer. The cofactor is dipyrromethane.

It catalyses the reaction 4 porphobilinogen + H2O = hydroxymethylbilane + 4 NH4(+). Its pathway is porphyrin-containing compound metabolism; protoporphyrin-IX biosynthesis; coproporphyrinogen-III from 5-aminolevulinate: step 2/4. In terms of biological role, tetrapolymerization of the monopyrrole PBG into the hydroxymethylbilane pre-uroporphyrinogen in several discrete steps. The sequence is that of Porphobilinogen deaminase from Methylococcus capsulatus (strain ATCC 33009 / NCIMB 11132 / Bath).